A 173-amino-acid chain; its full sequence is dCTP deaminase, dUMP-forming (173 aa).

Residues 93–98, Asp111, 119–121, Gln138, and Tyr151 each bind dCTP; these read RSSTGR and TLE. Residue Glu121 is the Proton donor/acceptor of the active site.

It belongs to the dCTP deaminase family. In terms of assembly, homotrimer.

It carries out the reaction dCTP + 2 H2O = dUMP + NH4(+) + diphosphate. It functions in the pathway pyrimidine metabolism; dUMP biosynthesis; dUMP from dCTP: step 1/1. Functionally, bifunctional enzyme that catalyzes both the deamination of dCTP to dUTP and the hydrolysis of dUTP to dUMP without releasing the toxic dUTP intermediate. The sequence is that of dCTP deaminase, dUMP-forming from Clostridium botulinum (strain Eklund 17B / Type B).